Here is a 491-residue protein sequence, read N- to C-terminus: Pre-glycoprotein polyprotein GP complex (491 aa).

Gly-2 is lipidated: N-myristoyl glycine; by host. The Extracellular portion of the chain corresponds to 2–17 (GQIVTFFQEVPHVIEE). Residues 18–33 (VMNIVLIALSVLAVLK) traverse the membrane as a helical segment. The Cytoplasmic portion of the chain corresponds to 34–58 (GLYNFATCGLVGLVTFLLLCGRSCT). Residue Cys-57 coordinates Zn(2+). Topologically, residues 59-432 (TSLYKGVYEL…QGKTPLGLVD (374 aa)) are extracellular. Asn-79, Asn-89, Asn-99, Asn-109, Asn-119, and Asn-167 each carry an N-linked (GlcNAc...) asparagine; by host glycan. 6 disulfides stabilise this stretch: Cys-86–Cys-231, Cys-118–Cys-155, Cys-180–Cys-212, Cys-279–Cys-292, Cys-301–Cys-310, and Cys-364–Cys-385. Asn-224 carries an N-linked (GlcNAc...) asparagine; by host glycan. N-linked (GlcNAc...) asparagine; by host glycans are attached at residues Asn-365, Asn-373, Asn-390, and Asn-395. A helical membrane pass occupies residues 433–453 (LFVFSTSFYLISIFLHLVKIP). The Cytoplasmic segment spans residues 454 to 491 (THRHIVGKSCPKPHRLNHMGICSCGLYKQPGVPVKWKR). The Zn(2+) site is built by His-455, His-457, Cys-463, His-467, Cys-475, and Cys-477.

The protein belongs to the arenaviridae GPC protein family. In terms of assembly, interacts with glycoprotein G2. Part of the GP complex (GP-C) together with glycoprotein G1 and glycoprotein G2. The GP-complex interacts with protein Z, which interacts with ribonucleocapsid; these interactions may induce virion budding. As to quaternary structure, homotrimer; disulfide-linked. In pre-fusion state, G1 homotrimers bind G2 homotrimers via ionic interactions. Part of the GP complex (GP-C) together with glycoprotein G2 and the stable signal peptide. Interacts with the primary host receptor DAG1 on the cell surface; this interaction occurs at pH 8.0 but not at pH 6.0 and below. Upon virus internalization and at endosomal pH, interacts with the host lysosomal protein LAMP1; this interaction mediates G1 dissociation from GP-C and membrane fusion. The GP-complex interacts with protein Z, which interacts with ribonucleocapsid; these interactions may induce virion budding. Homotrimer. Interacts with the stable signal peptide. In pre-fusion state, G2 homotrimers bind G1 homotrimers via ionic interactions. Part of the GP complex (GP-C) together with glycoprotein G1 and the stable signal peptide. Acidification in the endosome triggers rearrangements, which ultimately leads to a 6 helix bundle formed by the two heptad repeat domains (HR1 and HR2) in post-fusion state. The GP-complex interacts with protein Z, which interacts with ribonucleocapsid; these interactions may induce virion budding. Specific enzymatic cleavages in vivo yield mature proteins. GP-C polyprotein is cleaved in the endoplasmic reticulum by the host protease MBTPS1. Only cleaved glycoprotein is incorporated into virions. Post-translationally, the SSP remains stably associated with the GP complex following cleavage by signal peptidase and plays crucial roles in the trafficking of GP through the secretory pathway. In terms of processing, myristoylation is necessary for GP2-mediated fusion activity.

The protein localises to the virion membrane. It is found in the host endoplasmic reticulum membrane. Its subcellular location is the host Golgi apparatus membrane. The protein resides in the host cell membrane. In terms of biological role, functions as a cleaved signal peptide that is retained as the third component of the GP complex (GP-C). Helps to stabilize the spike complex in its native conformation. The SSP is required for efficient glycoprotein expression, post-translational maturation cleavage of G1 and G2, glycoprotein transport to the cell surface plasma membrane, formation of infectious virus particles, and acid pH-dependent glycoprotein-mediated cell fusion. Its function is as follows. Forms the virion spikes together with glycoprotein G2. The glycoprotein spike trimers are connected to the underlying matrix. Interacts with the host receptor. Mediates virus attachment to the host primary receptor alpha-dystroglycan DAG1 (alpha-DG) at the cell surface. This attachment induces virion internalization apparently through macropinocytosis. Following endocytosis, there is a pH-dependent switch from binding DAG1 to the host lysosomal receptor LAMP1. This latter binding triggers the dissociation of GP1, exposing the fusion subunit, GP2, such that fusion can occur. Down-modulates host DAG1. Forms the virion spikes together with glycoprotein G1. The glycoprotein spike trimers are connected to the underlying matrix. Class I viral fusion protein that directs fusion of viral and host endosomal membranes, leading to delivery of the nucleocapsid into the cytoplasm. Membrane fusion is mediated by irreversible conformational changes induced by acidification. In Homo sapiens (Human), this protein is Pre-glycoprotein polyprotein GP complex.